Reading from the N-terminus, the 95-residue chain is Cobalt transport protein CbiN (95 aa).

2 consecutive transmembrane segments (helical) span residues 7–27 (IMLI…SGLG) and 67–87 (LLFA…FGYY).

Belongs to the CbiN family. As to quaternary structure, forms an energy-coupling factor (ECF) transporter complex composed of an ATP-binding protein (A component, CbiO), a transmembrane protein (T component, CbiQ) and 2 possible substrate-capture proteins (S components, CbiM and CbiN) of unknown stoichimetry.

It is found in the cell membrane. It functions in the pathway cofactor biosynthesis; adenosylcobalamin biosynthesis. Part of the energy-coupling factor (ECF) transporter complex CbiMNOQ involved in cobalt import. In Methanothermobacter marburgensis (strain ATCC BAA-927 / DSM 2133 / JCM 14651 / NBRC 100331 / OCM 82 / Marburg) (Methanobacterium thermoautotrophicum), this protein is Cobalt transport protein CbiN.